Here is a 571-residue protein sequence, read N- to C-terminus: Potassium-transporting ATPase potassium-binding subunit (571 aa).

The next 12 helical transmembrane spans lie at 5 to 25 (GWMQ…PLGG), 64 to 84 (LAYA…LYAL), 136 to 156 (GLTH…VALI), 179 to 199 (LYVL…QGMP), 220 to 240 (VGPV…GGFF), 254 to 274 (LSNF…TNVF), 285 to 305 (WAIL…TYWA), 330 to 350 (FGIA…CGAV), 375 to 395 (IIGG…VAIF), 421 to 441 (MLGI…ATVV), 488 to 508 (LAIG…AIAG), and 527 to 547 (GGLF…LTFF).

The protein belongs to the KdpA family. As to quaternary structure, the system is composed of three essential subunits: KdpA, KdpB and KdpC.

It is found in the cell inner membrane. Functionally, part of the high-affinity ATP-driven potassium transport (or Kdp) system, which catalyzes the hydrolysis of ATP coupled with the electrogenic transport of potassium into the cytoplasm. This subunit binds the periplasmic potassium ions and delivers the ions to the membrane domain of KdpB through an intramembrane tunnel. This chain is Potassium-transporting ATPase potassium-binding subunit, found in Methylorubrum extorquens (strain PA1) (Methylobacterium extorquens).